A 262-amino-acid chain; its full sequence is Acyl-[acyl-carrier-protein]--UDP-N-acetylglucosamine O-acyltransferase (262 aa).

It belongs to the transferase hexapeptide repeat family. LpxA subfamily. As to quaternary structure, homotrimer.

The protein localises to the cytoplasm. The enzyme catalyses a (3R)-hydroxyacyl-[ACP] + UDP-N-acetyl-alpha-D-glucosamine = a UDP-3-O-[(3R)-3-hydroxyacyl]-N-acetyl-alpha-D-glucosamine + holo-[ACP]. The protein operates within glycolipid biosynthesis; lipid IV(A) biosynthesis; lipid IV(A) from (3R)-3-hydroxytetradecanoyl-[acyl-carrier-protein] and UDP-N-acetyl-alpha-D-glucosamine: step 1/6. Functionally, involved in the biosynthesis of lipid A, a phosphorylated glycolipid that anchors the lipopolysaccharide to the outer membrane of the cell. The polypeptide is Acyl-[acyl-carrier-protein]--UDP-N-acetylglucosamine O-acyltransferase (Paraburkholderia xenovorans (strain LB400)).